We begin with the raw amino-acid sequence, 215 residues long: Ribosomal RNA small subunit methyltransferase G (215 aa).

S-adenosyl-L-methionine contacts are provided by glycine 71, leucine 76, and arginine 135.

It belongs to the methyltransferase superfamily. RNA methyltransferase RsmG family.

Its subcellular location is the cytoplasm. Its function is as follows. Specifically methylates the N7 position of a guanine in 16S rRNA. In Salinibacter ruber (strain DSM 13855 / M31), this protein is Ribosomal RNA small subunit methyltransferase G.